Reading from the N-terminus, the 1141-residue chain is Eukaryotic translation initiation factor 3 subunit A (1141 aa).

The region spanning 319-501 is the PCI domain; it reads LQRMAAHVLL…NSIYFGTDLT (183 aa). 2 stretches are compositionally biased toward basic and acidic residues: residues 588 to 623 and 829 to 899; these read QNNA…EERE and AAEE…RGGD. Disordered stretches follow at residues 588–631 and 829–1141; these read QNNA…QNEI and AAEE…VKRR. Phosphoserine is present on Ser-908. Basic and acidic residues-rich tracts occupy residues 920–976, 990–1051, 1059–1087, and 1110–1131; these read ERND…EPDT, SRDD…EPQR, DAPR…RGDQ, and TREE…KAGD.

The protein belongs to the eIF-3 subunit A family. Component of the eukaryotic translation initiation factor 3 (eIF-3) complex. The eIF-3 complex interacts with pix.

Its subcellular location is the cytoplasm. RNA-binding component of the eukaryotic translation initiation factor 3 (eIF-3) complex, which is involved in protein synthesis of a specialized repertoire of mRNAs and, together with other initiation factors, stimulates binding of mRNA and methionyl-tRNAi to the 40S ribosome. The eIF-3 complex specifically targets and initiates translation of a subset of mRNAs involved in cell proliferation. The sequence is that of Eukaryotic translation initiation factor 3 subunit A from Drosophila sechellia (Fruit fly).